We begin with the raw amino-acid sequence, 72 residues long: RTCNKTFSDQSKICPPGENICYTKTWCDAWCSQRGKRVELGCAATCPKVKAGVEIKCCSTDDCDKFQFGKPR.

5 disulfides stabilise this stretch: cysteine 3-cysteine 21, cysteine 14-cysteine 42, cysteine 27-cysteine 31, cysteine 46-cysteine 57, and cysteine 58-cysteine 63.

It belongs to the three-finger toxin family. Long-chain subfamily. Type II alpha-neurotoxin sub-subfamily. As to expression, expressed by the venom gland.

The protein resides in the secreted. In terms of biological role, binds with high affinity to muscular (alpha-1/CHRNA1) and neuronal (alpha-7/CHRNA7) nicotinic acetylcholine receptor (nAChR) and inhibits acetylcholine from binding to the receptor, thereby impairing neuromuscular and neuronal transmission. This Dendroaspis polylepis polylepis (Black mamba) protein is Alpha-elapitoxin-Dpp2a.